The sequence spans 211 residues: Proteasome subunit beta 2 (211 aa).

The propeptide at 1–17 (MVIMGNELQLENKILKG) is removed in mature form; by autocatalysis. The Nucleophile role is filled by threonine 18.

It belongs to the peptidase T1B family. The 20S proteasome core is composed of 14 alpha and 14 beta subunits that assemble into four stacked heptameric rings, resulting in a barrel-shaped structure. The two inner rings, each composed of seven catalytic beta subunits, are sandwiched by two outer rings, each composed of seven alpha subunits. The catalytic chamber with the active sites is on the inside of the barrel. Has a gated structure, the ends of the cylinder being occluded by the N-termini of the alpha-subunits. Is capped at one or both ends by the proteasome regulatory ATPase, PAN.

The protein resides in the cytoplasm. The enzyme catalyses Cleavage of peptide bonds with very broad specificity.. Its activity is regulated as follows. The formation of the proteasomal ATPase PAN-20S proteasome complex, via the docking of the C-termini of PAN into the intersubunit pockets in the alpha-rings, triggers opening of the gate for substrate entry. Interconversion between the open-gate and close-gate conformations leads to a dynamic regulation of the 20S proteasome proteolysis activity. Functionally, component of the proteasome core, a large protease complex with broad specificity involved in protein degradation. This Saccharolobus solfataricus (strain 98/2) (Sulfolobus solfataricus) protein is Proteasome subunit beta 2.